The primary structure comprises 281 residues: Ribosomal RNA small subunit methyltransferase I (281 aa).

Belongs to the methyltransferase superfamily. RsmI family.

It localises to the cytoplasm. It carries out the reaction cytidine(1402) in 16S rRNA + S-adenosyl-L-methionine = 2'-O-methylcytidine(1402) in 16S rRNA + S-adenosyl-L-homocysteine + H(+). Its function is as follows. Catalyzes the 2'-O-methylation of the ribose of cytidine 1402 (C1402) in 16S rRNA. The chain is Ribosomal RNA small subunit methyltransferase I from Erythrobacter litoralis (strain HTCC2594).